The sequence spans 128 residues: Aspartate 1-decarboxylase (128 aa).

S25 (schiff-base intermediate with substrate; via pyruvic acid) is an active-site residue. S25 carries the post-translational modification Pyruvic acid (Ser). T57 serves as a coordination point for substrate. Catalysis depends on Y58, which acts as the Proton donor. 73-75 serves as a coordination point for substrate; that stretch reads GSA.

This sequence belongs to the PanD family. As to quaternary structure, heterooctamer of four alpha and four beta subunits. Requires pyruvate as cofactor. In terms of processing, is synthesized initially as an inactive proenzyme, which is activated by self-cleavage at a specific serine bond to produce a beta-subunit with a hydroxyl group at its C-terminus and an alpha-subunit with a pyruvoyl group at its N-terminus.

Its subcellular location is the cytoplasm. It catalyses the reaction L-aspartate + H(+) = beta-alanine + CO2. Its pathway is cofactor biosynthesis; (R)-pantothenate biosynthesis; beta-alanine from L-aspartate: step 1/1. In terms of biological role, catalyzes the pyruvoyl-dependent decarboxylation of aspartate to produce beta-alanine. The protein is Aspartate 1-decarboxylase of Burkholderia multivorans (strain ATCC 17616 / 249).